The following is a 1177-amino-acid chain: Dynein axonemal assembly factor 9 (1177 aa).

A disordered region spans residues 1–27 (MDVYPPRRQGLPRARSPGGSSRGSPSV). Residues 11–27 (LPRARSPGGSSRGSPSV) show a composition bias toward low complexity.

In terms of assembly, interacts with ARL3.

In terms of biological role, may act as an effector for ARL3. This is Dynein axonemal assembly factor 9 from Homo sapiens (Human).